The following is a 956-amino-acid chain: UvrABC system protein A (956 aa).

33 to 40 is a binding site for ATP; the sequence is GLSGSGKS. The C4-type zinc finger occupies 252 to 279; the sequence is CPYCGFSVGELEPRMFSFNSPFGACPTC. 2 ABC transporter domains span residues 309 to 587 and 607 to 936; these read WRPI…KNSI and GNGL…KYLK. 639–646 lines the ATP pocket; that stretch reads GVSGSGKS. The C4-type zinc finger occupies 738–764; sequence CEACKGDGIIKIEMHFLPDVYVPCEVC.

It belongs to the ABC transporter superfamily. UvrA family. Forms a heterotetramer with UvrB during the search for lesions.

It is found in the cytoplasm. The UvrABC repair system catalyzes the recognition and processing of DNA lesions. UvrA is an ATPase and a DNA-binding protein. A damage recognition complex composed of 2 UvrA and 2 UvrB subunits scans DNA for abnormalities. When the presence of a lesion has been verified by UvrB, the UvrA molecules dissociate. This is UvrABC system protein A from Listeria monocytogenes serotype 4b (strain F2365).